The chain runs to 306 residues: MKPTAEILTDILAEVRPLIGQGKVADYIPALAKVPNNKLAIAVYTNEGEVIKAGDADESFSIQSISKALSLTLAMCLYKQEEIWARVGKEPSGQAFNSLIQLEMEQGIPRNPFINAGAIVVADLLQSRLSAPRQRLLEFVRQLSGDTHIVYDKVVAASEMMHGDRNAAIAYLMRSFGNFENEVIPVLQNYFHACALKMSCVDLAKTFSYLANKGTSVQTGKPVVSPTQTKQLNALLATCGLYDGAGEFAYRVGMPGKSGVGGGIIAVVPGEMTIAVWSPELDASGNSLAGTKALELLSERIGRSIF.

Residues Ser64, Asn115, Glu159, Asn166, Tyr190, Tyr242, and Val260 each coordinate substrate.

This sequence belongs to the glutaminase family. Homotetramer.

The enzyme catalyses L-glutamine + H2O = L-glutamate + NH4(+). In Vibrio parahaemolyticus serotype O3:K6 (strain RIMD 2210633), this protein is Glutaminase.